A 158-amino-acid chain; its full sequence is Aspartate carbamoyltransferase regulatory chain (158 aa).

The Zn(2+) site is built by C111, C116, C140, and C143.

Belongs to the PyrI family. As to quaternary structure, contains catalytic and regulatory chains. Zn(2+) serves as cofactor.

Involved in allosteric regulation of aspartate carbamoyltransferase. The chain is Aspartate carbamoyltransferase regulatory chain from Metallosphaera sedula (strain ATCC 51363 / DSM 5348 / JCM 9185 / NBRC 15509 / TH2).